A 395-amino-acid chain; its full sequence is Putative pyridoxal phosphate-dependent acyltransferase (395 aa).

110–111 (GF) contributes to the pyridoxal 5'-phosphate binding site. His-135 contacts substrate. Residues Ser-185, 210 to 213 (DDAH), and 240 to 243 (TLSK) each bind pyridoxal 5'-phosphate. Residue Lys-243 is modified to N6-(pyridoxal phosphate)lysine. Thr-357 provides a ligand contact to substrate.

This sequence belongs to the class-II pyridoxal-phosphate-dependent aminotransferase family. In terms of assembly, homodimer. It depends on pyridoxal 5'-phosphate as a cofactor.

This Staphylococcus aureus (strain COL) protein is Putative pyridoxal phosphate-dependent acyltransferase.